A 335-amino-acid polypeptide reads, in one-letter code: Glyceraldehyde-3-phosphate dehydrogenase (335 aa).

Residues 10–11 (RI), Asp33, Lys77, and Thr119 contribute to the NAD(+) site. D-glyceraldehyde 3-phosphate is bound by residues 150 to 152 (SCT), Thr181, 210 to 211 (TG), and Arg233. Residue Cys151 is the Nucleophile of the active site. NAD(+) is bound at residue Asn315.

Belongs to the glyceraldehyde-3-phosphate dehydrogenase family. Homotetramer.

The protein localises to the cytoplasm. The catalysed reaction is D-glyceraldehyde 3-phosphate + phosphate + NAD(+) = (2R)-3-phospho-glyceroyl phosphate + NADH + H(+). It functions in the pathway carbohydrate degradation; glycolysis; pyruvate from D-glyceraldehyde 3-phosphate: step 1/5. Its function is as follows. Catalyzes the oxidative phosphorylation of glyceraldehyde 3-phosphate (G3P) to 1,3-bisphosphoglycerate (BPG) using the cofactor NAD. The first reaction step involves the formation of a hemiacetal intermediate between G3P and a cysteine residue, and this hemiacetal intermediate is then oxidized to a thioester, with concomitant reduction of NAD to NADH. The reduced NADH is then exchanged with the second NAD, and the thioester is attacked by a nucleophilic inorganic phosphate to produce BPG. This Chlamydia muridarum (strain MoPn / Nigg) protein is Glyceraldehyde-3-phosphate dehydrogenase (gap).